Consider the following 102-residue polypeptide: Inner membrane protein YaiY (102 aa).

Residues 1 to 24 are Cytoplasmic-facing; it reads MADFTLSKSLFSGKYRNASSTPGN. Residues 25–45 form a helical membrane-spanning segment; that stretch reads IAYALFVLFCFWAGAQLLNLL. The Periplasmic portion of the chain corresponds to 46-74; sequence VHAPGVYERLMQVQETGRPRVEIGLGVGT. Residues 75-95 form a helical membrane-spanning segment; the sequence is IFGLIPFLVGCLIFAVVALWL. The Cytoplasmic segment spans residues 96–102; it reads HWRHRRQ.

The protein localises to the cell inner membrane. This Escherichia coli O157:H7 protein is Inner membrane protein YaiY (yaiY).